We begin with the raw amino-acid sequence, 395 residues long: Elongation factor Tu (395 aa).

The tr-type G domain occupies 10–205; it reads KVHMNVGTIG…AMDSYFEDPV (196 aa). Residues 19-26 are G1; that stretch reads GHVDHGKT. 19 to 26 is a GTP binding site; sequence GHVDHGKT. Position 26 (Thr26) interacts with Mg(2+). Residues 60 to 64 form a G2 region; the sequence is GITIN. Positions 81 to 84 are G3; it reads DCPG. GTP contacts are provided by residues 81 to 85 and 136 to 139; these read DCPGH and NKVD. The segment at 136-139 is G4; the sequence is NKVD. A G5 region spans residues 173 to 175; it reads SAF.

It belongs to the TRAFAC class translation factor GTPase superfamily. Classic translation factor GTPase family. EF-Tu/EF-1A subfamily. In terms of assembly, monomer.

Its subcellular location is the cytoplasm. It catalyses the reaction GTP + H2O = GDP + phosphate + H(+). In terms of biological role, GTP hydrolase that promotes the GTP-dependent binding of aminoacyl-tRNA to the A-site of ribosomes during protein biosynthesis. The polypeptide is Elongation factor Tu (Treponema pallidum (strain Nichols)).